We begin with the raw amino-acid sequence, 153 residues long: Endoribonuclease YbeY (153 aa).

3 residues coordinate Zn(2+): His-118, His-122, and His-128.

Belongs to the endoribonuclease YbeY family. The cofactor is Zn(2+).

It is found in the cytoplasm. Its function is as follows. Single strand-specific metallo-endoribonuclease involved in late-stage 70S ribosome quality control and in maturation of the 3' terminus of the 16S rRNA. This chain is Endoribonuclease YbeY, found in Staphylococcus saprophyticus subsp. saprophyticus (strain ATCC 15305 / DSM 20229 / NCIMB 8711 / NCTC 7292 / S-41).